We begin with the raw amino-acid sequence, 118 residues long: MRLYELVLIVRPELSSTEIDKLTDELTSIISNYEGKLVKHEYWGMRSLAYKINRNQRAHYIMLAISANNNILQKLKNKIKNNLEIIRSRFIKVKEISQTTSPILKNQSLEQTAIDVTS.

It belongs to the bacterial ribosomal protein bS6 family.

In terms of biological role, binds together with bS18 to 16S ribosomal RNA. The sequence is that of Small ribosomal subunit protein bS6 from Orientia tsutsugamushi (strain Ikeda) (Rickettsia tsutsugamushi).